The chain runs to 1094 residues: Probable arabinosyltransferase A (1094 aa).

13 consecutive transmembrane segments (helical) span residues 12-34 (IARLAAVVSGIAGLLLCGIVPLL), 205-224 (AVMLLGVLAVLVAMVGLAAL), 247-269 (GFASRLADAAVIATLLLWHVIGA), 322-344 (VWMRLPATLAGIACWLIVSRFVL), 356-375 (SNRVAVFTAGAVFLSAWLPF), 408-430 (AAVAIIVATLTATLAPQGLIALA), 451-470 (GLLAPLAVLAAALSLITVVV), 519-536 (FAVLVLLFCLFGVLFVLL), 543-565 (GLASGPAWRLIGTTAVGLLLLTF), 575-597 (GAFAGLAGVLGAVTAFTFARIGL), 604-626 (TLYVTALLFVLAWATSGINGWFY), 641-663 (IASHPVTSMFLTLSILTGLLAAW), and 684-706 (ILASTPLLVVAVIMVAGEVGSMA).

The protein belongs to the emb family.

The protein resides in the cell membrane. Functionally, arabinosyl transferase responsible for the polymerization of arabinose into the arabinan of arabinogalactan. This is Probable arabinosyltransferase A (embA) from Mycobacterium tuberculosis (strain CDC 1551 / Oshkosh).